A 446-amino-acid polypeptide reads, in one-letter code: Cyclin-F2-2 (446 aa).

The disordered stretch occupies residues 191-216 (YNGDNDAPAPDNSTASRPQLCAPYDD).

Belongs to the cyclin family. Cyclin F subfamily.

This chain is Cyclin-F2-2 (CYCF2-2), found in Oryza sativa subsp. japonica (Rice).